The primary structure comprises 437 residues: tRNA modification GTPase MnmE (437 aa).

3 residues coordinate (6S)-5-formyl-5,6,7,8-tetrahydrofolate: Arg21, Glu80, and Arg120. The TrmE-type G domain maps to 218–361 (GFVVVLAGPP…LLDRVAAAAG (144 aa)). Asn228 lines the K(+) pocket. GTP-binding positions include 228–233 (NAGKST), 247–253 (SPIPGTT), and 272–275 (DTAG). Ser232 provides a ligand contact to Mg(2+). K(+) is bound by residues Ser247, Ile249, and Thr252. Mg(2+) is bound at residue Thr253. Lys437 serves as a coordination point for (6S)-5-formyl-5,6,7,8-tetrahydrofolate.

This sequence belongs to the TRAFAC class TrmE-Era-EngA-EngB-Septin-like GTPase superfamily. TrmE GTPase family. As to quaternary structure, homodimer. Heterotetramer of two MnmE and two MnmG subunits. Requires K(+) as cofactor.

The protein localises to the cytoplasm. In terms of biological role, exhibits a very high intrinsic GTPase hydrolysis rate. Involved in the addition of a carboxymethylaminomethyl (cmnm) group at the wobble position (U34) of certain tRNAs, forming tRNA-cmnm(5)s(2)U34. The polypeptide is tRNA modification GTPase MnmE (Methylobacterium sp. (strain 4-46)).